The chain runs to 365 residues: Beta-parvin (365 aa).

The span at 1 to 12 (MSSAPPRSPTPR) shows a compositional bias: pro residues. Positions 1-52 (MSSAPPRSPTPRAPKMKKDESFLGKLGGTLARKKKTREVTDLQEEGKSAINS) are disordered. Serine 8 is subject to Phosphoserine. Over residues 37–47 (REVTDLQEEGK) the composition is skewed to basic and acidic residues. Calponin-homology (CH) domains follow at residues 88–195 (KELV…MHFR) and 255–362 (NLVK…TKYK).

Belongs to the parvin family. In terms of assembly, interacts with ILK, ARHGEF6, PXN (via LD motifs), ACTN2 and actin. Interacts with DYSF. In terms of processing, phosphorylated by ILK. Expressed predominantly in heart and moderately in spleen, lung and skeletal muscle.

It localises to the cell junction. It is found in the focal adhesion. Its subcellular location is the cell membrane. The protein localises to the cytoplasm. The protein resides in the cytoskeleton. It localises to the cell projection. It is found in the lamellipodium. Its subcellular location is the myofibril. The protein localises to the sarcomere. The protein resides in the z line. In terms of biological role, adapter protein that plays a role in integrin signaling via ILK and in activation of the GTPases CDC42 and RAC1 by guanine exchange factors, such as ARHGEF6. Is involved in the reorganization of the actin cytoskeleton and formation of lamellipodia. Plays a role in cell adhesion, cell spreading, establishment or maintenance of cell polarity, and cell migration. The sequence is that of Beta-parvin (Parvb) from Mus musculus (Mouse).